Reading from the N-terminus, the 288-residue chain is 4-diphosphocytidyl-2-C-methyl-D-erythritol kinase (288 aa).

The active site involves K11. Position 100–110 (100–110) interacts with ATP; that stretch reads PTSAGLGSGSS. D140 is a catalytic residue.

The protein belongs to the GHMP kinase family. IspE subfamily.

It carries out the reaction 4-CDP-2-C-methyl-D-erythritol + ATP = 4-CDP-2-C-methyl-D-erythritol 2-phosphate + ADP + H(+). It participates in isoprenoid biosynthesis; isopentenyl diphosphate biosynthesis via DXP pathway; isopentenyl diphosphate from 1-deoxy-D-xylulose 5-phosphate: step 3/6. Functionally, catalyzes the phosphorylation of the position 2 hydroxy group of 4-diphosphocytidyl-2C-methyl-D-erythritol. The sequence is that of 4-diphosphocytidyl-2-C-methyl-D-erythritol kinase from Wolbachia sp. subsp. Brugia malayi (strain TRS).